A 784-amino-acid chain; its full sequence is Endonuclease MutS2 (784 aa).

Position 335 to 342 (335 to 342 (GPNTGGKT)) interacts with ATP. Residues 709-784 (LDLRGERYED…GTGVTIVELK (76 aa)) form the Smr domain.

This sequence belongs to the DNA mismatch repair MutS family. MutS2 subfamily. Homodimer. Binds to stalled ribosomes, contacting rRNA.

Endonuclease that is involved in the suppression of homologous recombination and thus may have a key role in the control of bacterial genetic diversity. Its function is as follows. Acts as a ribosome collision sensor, splitting the ribosome into its 2 subunits. Detects stalled/collided 70S ribosomes which it binds and splits by an ATP-hydrolysis driven conformational change. Acts upstream of the ribosome quality control system (RQC), a ribosome-associated complex that mediates the extraction of incompletely synthesized nascent chains from stalled ribosomes and their subsequent degradation. Probably generates substrates for RQC. This chain is Endonuclease MutS2, found in Geobacillus sp. (strain WCH70).